Reading from the N-terminus, the 137-residue chain is UPF0768 protein C1952.04c (137 aa).

The segment covering 79-93 has biased composition (basic and acidic residues); the sequence is QRRRREDLPTPERPE. The disordered stretch occupies residues 79 to 137; the sequence is QRRRREDLPTPERPEASAQQHAFFPGSSSQQTDIPNVRPQPHIPPPRKSDEAPPPYSYK. A compositionally biased stretch (pro residues) spans 119–137; the sequence is PHIPPPRKSDEAPPPYSYK.

It belongs to the UPF0768 family.

The sequence is that of UPF0768 protein C1952.04c from Schizosaccharomyces pombe (strain 972 / ATCC 24843) (Fission yeast).